The following is a 409-amino-acid chain: Arginine deiminase (409 aa).

The Amidino-cysteine intermediate role is filled by C399.

It belongs to the arginine deiminase family.

It localises to the cytoplasm. The catalysed reaction is L-arginine + H2O = L-citrulline + NH4(+). The protein operates within amino-acid degradation; L-arginine degradation via ADI pathway; carbamoyl phosphate from L-arginine: step 1/2. This Streptococcus pneumoniae serotype 19F (strain G54) protein is Arginine deiminase.